A 99-amino-acid polypeptide reads, in one-letter code: Large ribosomal subunit protein uL23 (99 aa).

This sequence belongs to the universal ribosomal protein uL23 family. Part of the 50S ribosomal subunit. Contacts protein L29, and trigger factor when it is bound to the ribosome.

Functionally, one of the early assembly proteins it binds 23S rRNA. One of the proteins that surrounds the polypeptide exit tunnel on the outside of the ribosome. Forms the main docking site for trigger factor binding to the ribosome. This is Large ribosomal subunit protein uL23 from Agathobacter rectalis (strain ATCC 33656 / DSM 3377 / JCM 17463 / KCTC 5835 / VPI 0990) (Eubacterium rectale).